Consider the following 420-residue polypeptide: Ammonia monooxygenase beta subunit (420 aa).

Residues 1–25 (MGIKNLYKRGVMGLYGVAYAVAALA) form the signal peptide. Cu cation is bound by residues His38, His142, and His144. 2 helical membrane-spanning segments follow: residues 193 to 213 (GIFW…VFTA) and 240 to 260 (ITWV…RYTE).

The soluble ammonia monooxygenase is a nonamer composed of three alpha subunits (AmoA), three beta subunits (AmoB) and three gamma subunits (Cytochrome c1 PetC). The cofactor is Cu(2+).

The protein resides in the cell membrane. It localises to the cytoplasm. It catalyses the reaction AH2 + NH4(+) + O2 = hydroxylamine + A + H2O + H(+). With respect to regulation, in vitro, inhibited by acetylene. In terms of biological role, part of the ammonia monooxygenase complex, which catalyzes the oxidation of ammonia to hydroxylamine, the first reaction in the process of ammonia oxidation to nitrite. The protein is Ammonia monooxygenase beta subunit of Nitrosomonas europaea (strain ATCC 19718 / CIP 103999 / KCTC 2705 / NBRC 14298).